The primary structure comprises 169 residues: Der GTPase-activating protein YihI (169 aa).

2 disordered regions span residues 1–98 (MKPS…PQAE) and 144–169 (GLSY…LRGN). Basic residues predominate over residues 10-19 (SKGHAKARRK). Basic and acidic residues predominate over residues 20–30 (TREELDQEARD). Positions 31–40 (RKRLKKRRGH) are enriched in basic residues. Residues 49–58 (GNTTSGSKGQ) show a composition bias toward polar residues. Residues 147 to 159 (YDDDEEEEEDEKQ) show a composition bias toward acidic residues. Basic and acidic residues predominate over residues 160 to 169 (EDMMRLLRGN).

The protein belongs to the YihI family. Interacts with Der.

Its function is as follows. A GTPase-activating protein (GAP) that modifies Der/EngA GTPase function. May play a role in ribosome biogenesis. This is Der GTPase-activating protein YihI from Escherichia coli O6:K15:H31 (strain 536 / UPEC).